The sequence spans 438 residues: Coenzyme A disulfide reductase (438 aa).

Residue 8-33 coordinates FAD; it reads GAVAGGATCASQIRRLDKESEIIVFE. Substrate-binding residues include Thr-15, Gln-19, Arg-22, Ser-39, and Asn-42. The active-site Nucleophile is Cys-43. Cys-43 functions as the Redox-active in the catalytic mechanism. Lys-71 serves as a coordination point for substrate. 151 to 166 contacts NADP(+); sequence ALVVGAGYISLEVLEN. Position 267–277 (267–277) interacts with FAD; sequence TNIPNIYALGD. Position 299 (His-299) interacts with substrate. Tyr-419 is a binding site for FAD. A substrate-binding site is contributed by Lys-427.

The protein belongs to the class-III pyridine nucleotide-disulfide oxidoreductase family. In terms of assembly, homodimer. Requires FAD as cofactor.

The enzyme catalyses NADP(+) + 2 CoA = CoA-disulfide + NADPH + H(+). In terms of biological role, catalyzes specifically the NADPH-dependent reduction of coenzyme A disulfide. The protein is Coenzyme A disulfide reductase of Staphylococcus epidermidis (strain ATCC 35984 / DSM 28319 / BCRC 17069 / CCUG 31568 / BM 3577 / RP62A).